The following is a 424-amino-acid chain: UPF0597 protein Sbal223_1296 (424 aa).

This sequence belongs to the UPF0597 family.

This chain is UPF0597 protein Sbal223_1296, found in Shewanella baltica (strain OS223).